A 429-amino-acid chain; its full sequence is Lysine-specific demethylase JMJ30 (429 aa).

The JmjC domain occupies 272–429 (SSPMEPTYLA…WSNEAESSSS (158 aa)). Residues H326, D328, and H405 each contribute to the Fe cation site.

Belongs to the JARID1 histone demethylase family. In terms of assembly, interacts with EFM. Binds to ATXR2, ARF7 and ARF19. It depends on Fe(2+) as a cofactor. Expressed ubiquitously in vasculatures, roots, rosette leaves, stems, inflorescences and siliques. Mainly present in the root meristem and root differentiation area. Observed at high level in callus.

The protein localises to the nucleus. It is found in the cytoplasm. Its subcellular location is the endoplasmic reticulum. The catalysed reaction is N(6),N(6),N(6)-trimethyl-L-lysyl(36)-[histone H3] + 2 2-oxoglutarate + 2 O2 = N(6)-methyl-L-lysyl(36)-[histone H3] + 2 formaldehyde + 2 succinate + 2 CO2. It catalyses the reaction N(6),N(6),N(6)-trimethyl-L-lysyl(27)-[histone H3] + 2 2-oxoglutarate + 2 O2 = N(6)-methyl-L-lysyl(27)-[histone H3] + 2 formaldehyde + 2 succinate + 2 CO2. It carries out the reaction N(6),N(6)-dimethyl-L-lysyl(36)-[histone H3] + 2 2-oxoglutarate + 2 O2 = L-lysyl(36)-[histone H3] + 2 formaldehyde + 2 succinate + 2 CO2. Its function is as follows. Histone demethylase that demethylates 'Lys-36' (H3K36me) of histone H3 with a specific activity for H3K36me3 and H3K36me2. Also active on 'Lys-27' (H3K27me) of histone H3 with a specific activity for H3K27me3 and H3K27me2. No activity on H3K36me1 and H3K27me1. Involved in the control of flowering time by demethylating H3K36me2 at the FT locus and repressing its expression. Acts within the central clock and contributes, in parallel with LUX, to temperature compensation, probably as a component of the evening complex, to maintain circadian period at increasing temperatures; this mechanism involves binding to and regulation of CCA1 and PRR7 promoters. Works in concert with TOC1 to promote the morning-phased clock genes CCA1 and LHY which function as components of the central oscillator. Together with JMJ32, regulates the flowering-repressor FLOWERING LOCUS C (FLC) locus by removing the repressive histone modification H3 lysine 27 trimethylation (H3K27me3), especially at elevated temperatures (e.g. 29 degrees Celsius), thus preventing extreme precocious flowering. JMJ30 and JMJ32 are regulators involved in the integration of abscisic acid (ABA) and brassinosteroids (BR) signaling pathways. Together with JMJ32, controls ABA-mediated growth arrest during the post-germination stage in unfavorable conditions, and responses to ABA during root development, via the removal of repressive histone mark (H3K27me3) from the SnRK2.8 promoter, thus promoting SnRK2.8 expression and subsequent kinase-dependent ABI3 activation. In addition, removes the repressive histone marks (H3K27me3) from the BZR1 locus in response to stress and ABA, thus activating the BR signaling pathway which, in turn, inhibits the ABA signaling pathway. Able to drive tissue identity changes to promote callus formation form somatic cells via a massive genome-wide chromatin remodeling (e.g. H3K9me3 demethylation) leading to the induction of Lateral organ Boundaries-Domain (LBD) genes (e.g. LBD16 and LBD29) that establish root primordia; when in complex with ARF proteins (e.g. ARF7 and ARF19), recruits ATXR2 which promotes the deposition of H3K36me3 at LBD genes promoters, thus ensuring their stable activation during callus formation. This chain is Lysine-specific demethylase JMJ30, found in Arabidopsis thaliana (Mouse-ear cress).